We begin with the raw amino-acid sequence, 1281 residues long: Angiotensin-converting enzyme (1281 aa).

An N-terminal signal peptide occupies residues 1–17; the sequence is MPAALGLLLPWLSLVGA. Residues 18–1241 are Extracellular-facing; that stretch reads LQPGLEPPQS…MSVGTKQATA (1224 aa). Peptidase M2 domains lie at 28 to 610 and 629 to 1208; these read DPTE…LGWP and IVDE…LGWP. N42, N62, N80, N99, and N148 each carry an N-linked (GlcNAc...) asparagine glycan. C145 and C151 are joined by a disulfide. Y217 is a binding site for chloride. N-linked (GlcNAc...) asparagine glycosylation occurs at N304. The cysteines at positions 345 and 363 are disulfide-linked. Position 376 (H376) interacts with Zn(2+). The active-site Proton acceptor 1 is the E377. Positions 380 and 404 each coordinate Zn(2+). N-linked (GlcNAc...) asparagine glycosylation occurs at N495. The active-site Proton donor 1 is the H506. Chloride is bound at residue R515. C531 and C543 are joined by a disulfide. 6 N-linked (GlcNAc...) asparagine glycosylation sites follow: N535, N573, N601, N643, N663, and N746. C743 and C749 are oxidised to a cystine. Chloride contacts are provided by R777 and Y815. C943 and C961 are oxidised to a cystine. Position 974 (H974) interacts with Zn(2+). The active-site Proton acceptor 2 is E975. 2 residues coordinate Zn(2+): H978 and E1002. Residues W1076 and R1080 each contribute to the chloride site. The active-site Proton donor 2 is H1104. Position 1113 (R1113) interacts with chloride. C1129 and C1141 are joined by a disulfide. A glycan (N-linked (GlcNAc...) asparagine) is linked at N1177. The interval 1201-1240 is juxtamembrane stalk; the sequence is NGEVLGWPEYSWTPYAVTEFHAATDTADFLGMSVGTKQAT. A helical membrane pass occupies residues 1242–1262; that stretch reads GAWVLLALALVFLITSIFLGV. Over 1263-1281 the chain is Cytoplasmic; sequence KLFSSRRKAFKSSSEMELK.

This sequence belongs to the peptidase M2 family. The cofactor is Zn(2+). Requires chloride as cofactor.

The protein localises to the cell membrane. Its subcellular location is the cytoplasm. The enzyme catalyses Release of a C-terminal dipeptide, oligopeptide-|-Xaa-Yaa, when Xaa is not Pro, and Yaa is neither Asp nor Glu. Thus, conversion of angiotensin I to angiotensin II, with increase in vasoconstrictor activity, but no action on angiotensin II.. The catalysed reaction is angiotensin I + H2O = L-histidyl-L-leucine + angiotensin II. It catalyses the reaction bradykinin + H2O = L-Phe-L-Arg + bradykinin(1-7). It carries out the reaction substance P + H2O = substance P(1-9) + L-Leu-L-Met-NH2. The enzyme catalyses substance P + H2O = substance P(1-8) + Gly-L-Leu-L-Met-NH2. The catalysed reaction is substance P + H2O = L-Phe-L-Phe-Gly-L-Leu-L-Met-NH2 + substance P(1-6). It catalyses the reaction neurotensin + H2O = neurotensin(1-11) + L-isoleucyl-L-leucine. It carries out the reaction goralatide + H2O = N-acetyl-L-seryl-L-aspartate + L-lysyl-L-proline. The enzyme catalyses Met-enkephalin + H2O = L-phenylalanyl-L-methionine + L-tyrosylglycylglycine. The catalysed reaction is Leu-enkephalin + H2O = L-tyrosylglycylglycine + L-phenylalanyl-L-leucine. It catalyses the reaction Met-enkephalin-Arg-Phe + H2O = L-arginyl-L-phenylalanine + Met-enkephalin. In terms of biological role, dipeptidyl carboxypeptidase that removes dipeptides from the C-terminus of a variety of circulating hormones, such as angiotensin I, bradykinin or enkephalins, thereby playing a key role in the regulation of blood pressure, electrolyte homeostasis or synaptic plasticity. Composed of two similar catalytic domains, each possessing a functional active site, with different selectivity for substrates. Plays a major role in the angiotensin-renin system that regulates blood pressure and sodium retention by the kidney by converting angiotensin I to angiotensin II, resulting in an increase of the vasoconstrictor activity of angiotensin. Also able to inactivate bradykinin, a potent vasodilator, and therefore enhance the blood pressure response. Acts as a regulator of synaptic transmission by mediating cleavage of neuropeptide hormones, such as substance P, neurotensin or enkephalins. Catalyzes degradation of different enkephalin neuropeptides (Met-enkephalin, Leu-enkephalin, Met-enkephalin-Arg-Phe and possibly Met-enkephalin-Arg-Gly-Leu). Also acts as a regulator of hematopoietic stem cell differentiation by mediating degradation of hemoregulatory peptide N-acetyl-SDKP (AcSDKP). This Gallus gallus (Chicken) protein is Angiotensin-converting enzyme.